A 657-amino-acid polypeptide reads, in one-letter code: MAEGSGEVVVVPATGAANGLNNGAGGTSAQTSNPLSRKLRKILDTRLDNDKDMLEALKALSTFFVENSLRTRRNLRGDIERRSLAINEEFVSIFKEVKEELESIHEDVQAMSSCCQDMTSRLQAAKEQTQDLIVKTTKLQAESQRLEIRAQVADAFLSKFQLTSDEMSLLRGTREGPITEDFFKALGRVKQIHNDVKVLLRTNQQTAGLEIMEQMALLQETSYERLYRWAQSECRTLTQESCDISPVLTQAMEALQDRPVLYKYTLDEFGTARRSTVVRGFIDALTRGGPGGTPRPIEMHSHDPLRYVGDMLAWLHQATASEKEHLEALLKHVTAQGVEENIQEVVGHITEGVCRPLKVRIEQVIVAEPGAVLLYKISNLLKFYHHTISGIIGNSATTLLTTIEEMHLLSKKIFFNSLSLHASKLMDKVELPPPDLGPSSALNQTLVLLREVLASHDSSVVPLDARQADFVQVLSCVLDPLLQMCTVSASHLGTADMATFMVNSLYMMKTTLALFEFTDRRLEMLQFQIEAHLDTLINEQASYVLTRAGLSYIYNMVQQHKVEQGPLANLPNLDSVALKAAMVQFDRYLSAPDNLLMPQLNFLLSATVKEQIIKQSTELVCRAYGEVYAAVMNPVNEYKDPGSILHRSPQQVQTLLS.

It belongs to the COG6 family. As to quaternary structure, component of the conserved oligomeric Golgi complex which is composed of eight different subunits and is required for normal Golgi morphology and localization.

The protein localises to the golgi apparatus membrane. Its function is as follows. Required for normal Golgi function. The polypeptide is Conserved oligomeric Golgi complex subunit 6 (COG6) (Bos taurus (Bovine)).